A 66-amino-acid chain; its full sequence is Large ribosomal subunit protein bL35 (66 aa).

Belongs to the bacterial ribosomal protein bL35 family.

The polypeptide is Large ribosomal subunit protein bL35 (Wigglesworthia glossinidia brevipalpis).